The chain runs to 371 residues: Probable L-aspartate decarboxylase (371 aa).

Lys232 carries the N6-(pyridoxal phosphate)lysine modification.

The protein belongs to the group II decarboxylase family. MfnA subfamily. Pyridoxal 5'-phosphate serves as cofactor.

It carries out the reaction L-aspartate + H(+) = beta-alanine + CO2. It functions in the pathway cofactor biosynthesis; coenzyme A biosynthesis. Its function is as follows. Catalyzes the decarboxylation of L-aspartate to produce beta-alanine. The chain is Probable L-aspartate decarboxylase from Pyrococcus furiosus (strain ATCC 43587 / DSM 3638 / JCM 8422 / Vc1).